Here is a 380-residue protein sequence, read N- to C-terminus: Cytochrome b (380 aa).

4 helical membrane-spanning segments follow: residues 34–54, 78–99, 114–134, and 179–199; these read FGSL…LLAM, WLIR…YLHI, WNTG…GYVL, and FFAL…IHLT. Residues His84 and His98 each coordinate heme b. The heme b site is built by His183 and His197. An a ubiquinone-binding site is contributed by His202. A run of 4 helical transmembrane segments spans residues 227–247, 289–309, 321–341, and 348–368; these read TKDL…AMFS, LGGV…PFLH, LSQL…WVGS, and FIII…ILFP.

Belongs to the cytochrome b family. As to quaternary structure, the cytochrome bc1 complex contains 11 subunits: 3 respiratory subunits (MT-CYB, CYC1 and UQCRFS1), 2 core proteins (UQCRC1 and UQCRC2) and 6 low-molecular weight proteins (UQCRH/QCR6, UQCRB/QCR7, UQCRQ/QCR8, UQCR10/QCR9, UQCR11/QCR10 and a cleavage product of UQCRFS1). This cytochrome bc1 complex then forms a dimer. It depends on heme b as a cofactor.

Its subcellular location is the mitochondrion inner membrane. In terms of biological role, component of the ubiquinol-cytochrome c reductase complex (complex III or cytochrome b-c1 complex) that is part of the mitochondrial respiratory chain. The b-c1 complex mediates electron transfer from ubiquinol to cytochrome c. Contributes to the generation of a proton gradient across the mitochondrial membrane that is then used for ATP synthesis. The protein is Cytochrome b (MT-CYB) of Amazilia tzacatl (Rufous-tailed hummingbird).